The following is a 137-amino-acid chain: Cellular retinoic acid-binding protein 1 (137 aa).

The Nuclear localization signal signature appears at 21–31 (KALGVNAMLRK). 132–134 (RIY) is a binding site for all-trans-retinoate.

It belongs to the calycin superfamily. Fatty-acid binding protein (FABP) family.

The protein resides in the cytoplasm. Its function is as follows. Cytosolic CRABPs may regulate the access of retinoic acid to the nuclear retinoic acid receptors. This chain is Cellular retinoic acid-binding protein 1 (CRABP1), found in Homo sapiens (Human).